Consider the following 200-residue polypeptide: Anthranilate synthase component 2 (200 aa).

The Glutamine amidotransferase type-1 domain maps to 3–196 (NILLLDNIDS…IHWASLKYIT (194 aa)). L-glutamine is bound at residue 57–59 (GPS). The active-site Nucleophile; for GATase activity is the Cys-84. Residues Gln-88 and 134 to 135 (SL) each bind L-glutamine. Active-site for GATase activity residues include His-170 and Glu-172.

As to quaternary structure, heterotetramer consisting of two non-identical subunits: a beta subunit (TrpG) and a large alpha subunit (TrpE).

The catalysed reaction is chorismate + L-glutamine = anthranilate + pyruvate + L-glutamate + H(+). It participates in amino-acid biosynthesis; L-tryptophan biosynthesis; L-tryptophan from chorismate: step 1/5. Part of a heterotetrameric complex that catalyzes the two-step biosynthesis of anthranilate, an intermediate in the biosynthesis of L-tryptophan. In the first step, the glutamine-binding beta subunit (TrpG) of anthranilate synthase (AS) provides the glutamine amidotransferase activity which generates ammonia as a substrate that, along with chorismate, is used in the second step, catalyzed by the large alpha subunit of AS (TrpE) to produce anthranilate. In the absence of TrpG, TrpE can synthesize anthranilate directly from chorismate and high concentrations of ammonia. This chain is Anthranilate synthase component 2 (trpG), found in Buchnera aphidicola subsp. Acyrthosiphon pisum (strain APS) (Acyrthosiphon pisum symbiotic bacterium).